The following is a 428-amino-acid chain: Trigger factor (428 aa).

The 86-residue stretch at 163 to 248 folds into the PPIase FKBP-type domain; it reads GDTAVIDFEG…VHEIKEKRLP (86 aa).

Belongs to the FKBP-type PPIase family. Tig subfamily.

It is found in the cytoplasm. The enzyme catalyses [protein]-peptidylproline (omega=180) = [protein]-peptidylproline (omega=0). Functionally, involved in protein export. Acts as a chaperone by maintaining the newly synthesized protein in an open conformation. Functions as a peptidyl-prolyl cis-trans isomerase. The polypeptide is Trigger factor (Geobacillus sp. (strain WCH70)).